Consider the following 469-residue polypeptide: Adenosylhomocysteinase (469 aa).

Residues Thr60, Asp135, and Glu195 each coordinate substrate. 196 to 198 (TTT) serves as a coordination point for NAD(+). The substrate site is built by Lys225 and Asp229. NAD(+) is bound by residues Asn230, 259-264 (GYGDVG), Glu282, Asn317, 338-340 (IGH), and Asn383.

It belongs to the adenosylhomocysteinase family. NAD(+) serves as cofactor.

Its subcellular location is the cytoplasm. It carries out the reaction S-adenosyl-L-homocysteine + H2O = L-homocysteine + adenosine. The protein operates within amino-acid biosynthesis; L-homocysteine biosynthesis; L-homocysteine from S-adenosyl-L-homocysteine: step 1/1. Its function is as follows. May play a key role in the regulation of the intracellular concentration of adenosylhomocysteine. This Hyphomonas neptunium (strain ATCC 15444) protein is Adenosylhomocysteinase.